Here is a 251-residue protein sequence, read N- to C-terminus: Transcription factor bHLH144 (251 aa).

3 disordered regions span residues 1 to 20 (MQNNQFPHFSDEVGDRNMHN), 130 to 161 (YEENDDNEGEEDGGDSEEVSTARTSSRDYGNT), and 173 to 202 (NNNNNNNSRKQSLSGSASSSNNDGKGRKKM). A compositionally biased stretch (basic and acidic residues) spans 9–18 (FSDEVGDRNM). Residues 130–147 (YEENDDNEGEEDGGDSEE) show a composition bias toward acidic residues. Positions 148-161 (VSTARTSSRDYGNT) are enriched in polar residues. Positions 173-192 (NNNNNNNSRKQSLSGSASSS) are enriched in low complexity. The 50-residue stretch at 186-235 (SGSASSSNNDGKGRKKMKKMMGVLRRIVPGGEQMNTACVLDEAVQYLKSL) folds into the bHLH domain.

As to quaternary structure, homodimer. Interacts with LHW.

It localises to the nucleus. This is Transcription factor bHLH144 (BHLH144) from Arabidopsis thaliana (Mouse-ear cress).